A 136-amino-acid polypeptide reads, in one-letter code: Transport protein particle 20 kDa subunit (136 aa).

The protein belongs to the TRAPP small subunits family. Sedlin subfamily.

The protein resides in the cytoplasm. The protein localises to the golgi apparatus. It localises to the cis-Golgi network. It is found in the endoplasmic reticulum. Component of the TRAPP I and TRAPP II complexes. TRAPP I plays a key role in the late stages of endoplasmic reticulum to Golgi traffic. TRAPP II seems to play a role in intra-Golgi transport. The protein is Transport protein particle 20 kDa subunit (trs20) of Schizosaccharomyces pombe (strain 972 / ATCC 24843) (Fission yeast).